A 341-amino-acid polypeptide reads, in one-letter code: Ribosomal RNA small subunit methyltransferase C (341 aa).

This sequence belongs to the methyltransferase superfamily. RsmC family. In terms of assembly, monomer.

The protein resides in the cytoplasm. It catalyses the reaction guanosine(1207) in 16S rRNA + S-adenosyl-L-methionine = N(2)-methylguanosine(1207) in 16S rRNA + S-adenosyl-L-homocysteine + H(+). Its function is as follows. Specifically methylates the guanine in position 1207 of 16S rRNA in the 30S particle. The sequence is that of Ribosomal RNA small subunit methyltransferase C from Shewanella halifaxensis (strain HAW-EB4).